A 234-amino-acid polypeptide reads, in one-letter code: SPX domain-containing protein 6 (234 aa).

The SPX domain maps to 1 to 137; that stretch reads MKFGKLLKRQ…GGALAAPVAE (137 aa). The disordered stretch occupies residues 202 to 234; that stretch reads GSSTHGRHSLPPLTLPDSDWLRSFQPPSPIPIQ.

As to expression, predominantly expressed in roots and leaves.

May be involved in maintaining cellular Pi homeostasis when plants are exposed to an external change in Pi. The chain is SPX domain-containing protein 6 from Oryza sativa subsp. japonica (Rice).